We begin with the raw amino-acid sequence, 491 residues long: Glutamyl-tRNA(Gln) amidotransferase subunit A (491 aa).

Residues Lys-76 and Ser-154 each act as charge relay system in the active site. Residue Ser-178 is the Acyl-ester intermediate of the active site.

Belongs to the amidase family. GatA subfamily. As to quaternary structure, heterotrimer of A, B and C subunits.

The catalysed reaction is L-glutamyl-tRNA(Gln) + L-glutamine + ATP + H2O = L-glutaminyl-tRNA(Gln) + L-glutamate + ADP + phosphate + H(+). In terms of biological role, allows the formation of correctly charged Gln-tRNA(Gln) through the transamidation of misacylated Glu-tRNA(Gln) in organisms which lack glutaminyl-tRNA synthetase. The reaction takes place in the presence of glutamine and ATP through an activated gamma-phospho-Glu-tRNA(Gln). The sequence is that of Glutamyl-tRNA(Gln) amidotransferase subunit A from Cereibacter sphaeroides (strain ATCC 17025 / ATH 2.4.3) (Rhodobacter sphaeroides).